The sequence spans 368 residues: DNA replication and repair protein RecF (368 aa).

30–37 (GNNAQGKT) provides a ligand contact to ATP.

The protein belongs to the RecF family.

It is found in the cytoplasm. Its function is as follows. The RecF protein is involved in DNA metabolism; it is required for DNA replication and normal SOS inducibility. RecF binds preferentially to single-stranded, linear DNA. It also seems to bind ATP. In Streptococcus pyogenes serotype M12 (strain MGAS9429), this protein is DNA replication and repair protein RecF.